Consider the following 535-residue polypeptide: Alcohol O-acetyltransferase 2 (535 aa).

The tract at residues 19–36 (GHARRMGHLENYFAVLSR) is membrane association. Catalysis depends on charge relay system residues H189 and D193. Residues 515 to 532 (RGEWESFCKLFYQTIGEF) are membrane association.

This sequence belongs to the ATF1 alcohol acetyltransferase family.

The protein localises to the lipid droplet. It localises to the endoplasmic reticulum membrane. The catalysed reaction is an aliphatic alcohol + acetyl-CoA = an acetyl ester + CoA. In terms of biological role, can use acetyl-CoA to synthesize acetate esters from various alcohols, producing ethyl acetate, isoamyl acetate, isobutyl acetate, butyl acetate, hexyl acetate, heptyl acetate and octyl acetate. ATF2 seems to play only a minor role in the acetate ester synthesis, compared to ATF1. Plays an active role in the detoxification hydroxysteroids and possibly certain phytochemicals, in association with the efflux pumps PDR5 and SNQ2. In Saccharomyces cerevisiae (strain ATCC 204508 / S288c) (Baker's yeast), this protein is Alcohol O-acetyltransferase 2.